A 313-amino-acid polypeptide reads, in one-letter code: Protein PALE CRESS, chloroplastic (313 aa).

A chloroplast-targeting transit peptide spans 1–22 (MAATSLVLTCASPLFSSPRVIS).

Expressed in green tissues, including leaves. Accumulates in chloroplasts of mature stomatal guard cells.

The protein localises to the plastid. The protein resides in the chloroplast. It localises to the chromoplast. Its subcellular location is the etioplast. It is found in the amyloplast. In terms of biological role, required for the differentiation of chloroplast from proplastids or etioplasts, probably by modulating some chloroplast-encoded genes expression and mRNA maturation. Involved in leaf-cells differentiation. The sequence is that of Protein PALE CRESS, chloroplastic (PAC) from Arabidopsis thaliana (Mouse-ear cress).